We begin with the raw amino-acid sequence, 391 residues long: uncharacterized protein (391 aa).

Residues 118-149 (SINSLPPTTTTTTTTTTTTTIPNNNNNITLSP) are compositionally biased toward low complexity. Disordered stretches follow at residues 118–162 (SINS…HQHP), 184–258 (QTNV…TPRN), 272–327 (NNNL…NNLN), and 337–356 (LNLN…NNNN). Residues 150 to 162 (QHHHGQQQHHQHP) show a composition bias toward basic residues. Low complexity predominate over residues 186 to 211 (NVNNNNNNNNNNNNNNNSNNNNNNNN). Over residues 212–223 (DFSTPNSFSVPT) the composition is skewed to polar residues. The span at 244–256 (NTPNNSTSNPTTP) shows a compositional bias: low complexity.

This is an uncharacterized protein from Dictyostelium discoideum (Social amoeba).